Consider the following 739-residue polypeptide: Nucleoprotein (739 aa).

The interval M1–L25 is oligomerization, N-terminal arm. Residues T26 to L405 form an NP core region. Residues P415–S647 are disordered. Low complexity-rich tracts occupy residues S449–V458 and K504–G514. The Host PPP2R5C-binding motif signature appears at L562–E567. A compositionally biased stretch (acidic residues) spans E567–T579. A VP30-binding motif motif is present at residues P606–Y611. Residues Y611 to D638 are compositionally biased toward basic and acidic residues.

The protein belongs to the filoviruses nucleoprotein family. In terms of assembly, homooligomer. Homomultimerizes to form the nucleocapsid. Binds to viral genomic RNA. Interacts with VP35 and VP30 to form the nucleocapsid. Interacts with host PPP2R5C; this interaction leads to VP30 dephosphorylation and viral transcription. Interacts with VP24; this interaction facilitates nucleocapsid assembly and genome packaging. Interacts with matrix protein VP40; this interaction allows recruitment of the nucleocapsid into progeny virions. Interacts with host STAU1. Interacts with host NXF1 (via RNA-binding domain); this interaction recruits NXF1 to the inclusion bodies were viral replication takes place, probably to export viral mRNA-NXF1 complexes from these sites. Interacts with host CCDC92; this interaction sequesters NP in the host cytoplasm. Interacts with host TRIM14. In terms of processing, phosphorylated by host. O-glycosylated by host. Post-translationally, acetylated by host EP300 in vitro.

It localises to the virion. The protein resides in the host cytoplasm. Its function is as follows. Oligomerizes into helical capsid to encapsidate the viral genome, protecting it from nucleases and the cellular innate immune response. VP35 binds to and stabilizes monomeric NP, keeping it soluble. Upon virus replication, NP is recruited to bind cooperatively viral genomic RNA and VP35 is released. The encapsidated genomic RNA is termed the nucleocapsid and serves as template for transcription and replication. The nucleocapsid is helical with a pitch of 10.81 NP per turn and a diameter of about 22nm. Each NP binds to six nucleotides of viral genomic RNA, three being exposed to the solvant and three hidden into the nucleocapsid. Also recruits host PPP2R5C phosphatase to dephosphorylate VP30 and thereby promote viral transcription. Upon virion assembly and budding, NP binds to VP24 and possibly host STAU1. The chain is Nucleoprotein (NP) from Epomops franqueti (Franquet's epauletted fruit bat).